The following is a 440-amino-acid chain: Trigger factor (440 aa).

The 86-residue stretch at 163-248 (NDTVSINFKG…INSIKEKVLP (86 aa)) folds into the PPIase FKBP-type domain.

It belongs to the FKBP-type PPIase family. Tig subfamily.

Its subcellular location is the cytoplasm. It carries out the reaction [protein]-peptidylproline (omega=180) = [protein]-peptidylproline (omega=0). Involved in protein export. Acts as a chaperone by maintaining the newly synthesized protein in an open conformation. Functions as a peptidyl-prolyl cis-trans isomerase. This is Trigger factor from Finegoldia magna (strain ATCC 29328 / DSM 20472 / WAL 2508) (Peptostreptococcus magnus).